Here is a 617-residue protein sequence, read N- to C-terminus: Protein fem-1 homolog A (617 aa).

ANK repeat units lie at residues 2 to 32, 40 to 70, 82 to 111, 115 to 144, 148 to 177, 181 to 210, and 213 to 242; these read DISAAVFNAARDGKLKLMQKLLINKSPEERA, EGGTPLLIAARYGHLPVVHFLLERCGANVAL, EGAPPLWAASAAGHLPVVKALLEHGAPVNN, TNSTPLRAACFDGHLEIVRYLVEHQADLEV, HGHTCLMISCYKGHREIAQFLLEKGADVNR, KGNTALHDCAESGSLEIMKMLLKCDARMER, and YGMTPLLAASVTGHTNIVEFLVHQPRASRE. TPR repeat units lie at residues 245–279 and 339–372; these read IHALELLGATFVDKKRDLLGAMRYWRRAMELRWAG and SYYIRYRGAVYADSGNFERCIRLWKYALDMQQSN. ANK repeat units follow at residues 482–524 and 528–557; these read GGHT…DVDS and DNNTPLHIAAANGCPDIMAALIRAGAHFDA.

This sequence belongs to the fem-1 family. Component of a CRL2 E3 ubiquitin-protein ligase complex, also named ECS (Elongin BC-CUL2/5-SOCS-box protein) complex.

Its subcellular location is the mitochondrion. The protein resides in the cytoplasm. It functions in the pathway protein modification; protein ubiquitination. Its function is as follows. Substrate-recognition component of a Cul2-RING (CRL2) E3 ubiquitin-protein ligase complex of the DesCEND (destruction via C-end degrons) pathway, which recognizes a C-degron located at the extreme C terminus of target proteins, leading to their ubiquitination and degradation. The C-degron recognized by the DesCEND pathway is usually a motif of less than ten residues and can be present in full-length proteins, truncated proteins or proteolytically cleaved forms. The CRL2(FEM1A) complex specifically recognizes proteins with an arginine at the C-terminus: recognizes and binds proteins ending with -Lys/Arg-Xaa-Arg and -Lys/Arg-Xaa-Xaa-Arg C-degrons, leading to their ubiquitination and degradation. The polypeptide is Protein fem-1 homolog A (Danio rerio (Zebrafish)).